A 270-amino-acid polypeptide reads, in one-letter code: tRNA (guanine-N(1)-)-methyltransferase (270 aa).

S-adenosyl-L-methionine-binding positions include Gly-119 and 139–144; that span reads IGDYVI.

The protein belongs to the RNA methyltransferase TrmD family. Homodimer.

It is found in the cytoplasm. The catalysed reaction is guanosine(37) in tRNA + S-adenosyl-L-methionine = N(1)-methylguanosine(37) in tRNA + S-adenosyl-L-homocysteine + H(+). Functionally, specifically methylates guanosine-37 in various tRNAs. The sequence is that of tRNA (guanine-N(1)-)-methyltransferase from Nitrosomonas europaea (strain ATCC 19718 / CIP 103999 / KCTC 2705 / NBRC 14298).